The chain runs to 951 residues: Glycine dehydrogenase (decarboxylating) (951 aa).

Lys-709 carries the post-translational modification N6-(pyridoxal phosphate)lysine.

The protein belongs to the GcvP family. As to quaternary structure, the glycine cleavage system is composed of four proteins: P, T, L and H. Requires pyridoxal 5'-phosphate as cofactor.

The enzyme catalyses N(6)-[(R)-lipoyl]-L-lysyl-[glycine-cleavage complex H protein] + glycine + H(+) = N(6)-[(R)-S(8)-aminomethyldihydrolipoyl]-L-lysyl-[glycine-cleavage complex H protein] + CO2. Its function is as follows. The glycine cleavage system catalyzes the degradation of glycine. The P protein binds the alpha-amino group of glycine through its pyridoxal phosphate cofactor; CO(2) is released and the remaining methylamine moiety is then transferred to the lipoamide cofactor of the H protein. The polypeptide is Glycine dehydrogenase (decarboxylating) (Gluconobacter oxydans (strain 621H) (Gluconobacter suboxydans)).